Consider the following 263-residue polypeptide: HLA class II histocompatibility antigen, DM beta chain (263 aa).

The N-terminal stretch at 1–18 (MITFLPLLLGLSLGCTGA) is a signal peptide. The interval 19-112 (GGFVAHVEST…PFWGSLTNRT (94 aa)) is beta-1. Over 19–218 (GGFVAHVEST…PGLSPMQTLK (200 aa)) the chain is Lumenal. Disulfide bonds link Cys-29/Cys-97 and Cys-43/Cys-53. Asn-110 carries N-linked (GlcNAc...) asparagine glycosylation. Residues 113–207 (RPPSVQVAKT…GAPEPILRDW (95 aa)) form a beta-2 region. The region spanning 114–208 (PPSVQVAKTT…APEPILRDWT (95 aa)) is the Ig-like C1-type domain. An intrachain disulfide couples Cys-135 to Cys-192. The interval 208–218 (TPGLSPMQTLK) is connecting peptide. A helical transmembrane segment spans residues 219-239 (VSVSAVTLGLGLIIFSLGVIS). Residues 240–263 (WRRAGHSSYTPLPGSNYSEGWHIS) lie on the Cytoplasmic side of the membrane. Residues 248–251 (YTPL) carry the YXXZ motif motif.

This sequence belongs to the MHC class II family. As to quaternary structure, heterodimer of an alpha chain (DMA) and a beta chain (DMB). Interacts with MHCII; this interaction mediates rapid selection of high-affinity peptides in a pH-dependent manner, with an optimum at pH 5.5.

It localises to the late endosome membrane. It is found in the lysosome membrane. Its function is as follows. Plays a critical role in catalyzing the release of class II-associated invariant chain peptide (CLIP) from newly synthesized MHC class II molecules and freeing the peptide binding site for acquisition of antigenic peptides. In B-cells, the interaction between HLA-DM and MHC class II molecules is regulated by HLA-DO. The protein is HLA class II histocompatibility antigen, DM beta chain (HLA-DMB) of Homo sapiens (Human).